A 106-amino-acid chain; its full sequence is Ribosomal processing cysteine protease Prp (106 aa).

The Proton donor role is filled by His-22. Catalysis depends on Cys-34, which acts as the Nucleophile.

Belongs to the Prp family. In terms of assembly, homodimer. A mutant protein unable to cleave bL27 copurifies with its substrate.

Not inhibited by short peptide analogs; a 6-mer inhibits only 20% while a 13-mer inhibits 63%. Inhibited by Ac-KLNLQFF-CH(2) which binds covalantly to Cys-34. Inhibited by mersalyl acid (C13H18HgNO6). Its function is as follows. An essential cysteine protease that cleaves the N-terminal 9 amino acids from ribosomal protein bL27. Also acts as an N-terminal protease on the major capsid and scaffold assembly proteins of bacteriophage 80alpha. Cleavage of the N-terminus of bL27 (and thus this enzyme) is essential for growth; it cannot be replaced by a 'pre-cleaved' or non-cleavable form of bL27. Might serve a chaperone function during ribosome assembly. This Staphylococcus aureus (strain NCTC 8325 / PS 47) protein is Ribosomal processing cysteine protease Prp.